Reading from the N-terminus, the 121-residue chain is LOB domain-containing protein 24 (121 aa).

The 102-residue stretch at 4–105 (KRCAACKYLR…NELAKTQAEI (102 aa)) folds into the LOB domain.

Belongs to the LOB domain-containing protein family.

This is LOB domain-containing protein 24 (LBD24) from Arabidopsis thaliana (Mouse-ear cress).